The following is a 462-amino-acid chain: L-seryl-tRNA(Sec) selenium transferase (462 aa).

Lys292 is modified (N6-(pyridoxal phosphate)lysine).

The protein belongs to the SelA family. Pyridoxal 5'-phosphate serves as cofactor.

Its subcellular location is the cytoplasm. It catalyses the reaction L-seryl-tRNA(Sec) + selenophosphate + H(+) = L-selenocysteinyl-tRNA(Sec) + phosphate. It functions in the pathway aminoacyl-tRNA biosynthesis; selenocysteinyl-tRNA(Sec) biosynthesis; selenocysteinyl-tRNA(Sec) from L-seryl-tRNA(Sec) (bacterial route): step 1/1. Functionally, converts seryl-tRNA(Sec) to selenocysteinyl-tRNA(Sec) required for selenoprotein biosynthesis. This Geobacter sulfurreducens (strain ATCC 51573 / DSM 12127 / PCA) protein is L-seryl-tRNA(Sec) selenium transferase.